The primary structure comprises 354 residues: Hyaluronan and proteoglycan link protein 1 (354 aa).

A propeptide spanning residues 1–15 (MKSLLLLVLISFCWA) is cleaved from the precursor. N-linked (GlcNAc...) asparagine glycans are attached at residues N21 and N56. Residues 38–152 (PRLLVEAEQA…EGLEDDTAVV (115 aa)) form the Ig-like V-type domain. Cystine bridges form between C61–C139, C181–C252, C205–C226, C279–C349, and C304–C325. Link domains lie at 159 to 254 (VVFP…FCFT) and 259 to 351 (GRFY…YCFR).

This sequence belongs to the HAPLN family.

Its subcellular location is the secreted. The protein localises to the extracellular space. It is found in the extracellular matrix. Its function is as follows. Stabilizes the aggregates of proteoglycan monomers with hyaluronic acid in the extracellular cartilage matrix. In Bos taurus (Bovine), this protein is Hyaluronan and proteoglycan link protein 1 (HAPLN1).